Here is a 296-residue protein sequence, read N- to C-terminus: 4-hydroxybenzoate octaprenyltransferase (296 aa).

Helical transmembrane passes span 28-48 (PIGI…AGNG), 52-72 (LANV…GCCI), 102-122 (ALTL…CTNS), 145-167 (TYYP…FTAA), 174-196 (GAWL…YAMV), 219-239 (SIIL…GSRF), 241-261 (LGGW…WEYW), and 275-295 (FLHN…DYAL).

Belongs to the UbiA prenyltransferase family. Mg(2+) serves as cofactor.

It is found in the cell inner membrane. It catalyses the reaction all-trans-octaprenyl diphosphate + 4-hydroxybenzoate = 4-hydroxy-3-(all-trans-octaprenyl)benzoate + diphosphate. It functions in the pathway cofactor biosynthesis; ubiquinone biosynthesis. Catalyzes the prenylation of para-hydroxybenzoate (PHB) with an all-trans polyprenyl group. Mediates the second step in the final reaction sequence of ubiquinone-8 (UQ-8) biosynthesis, which is the condensation of the polyisoprenoid side chain with PHB, generating the first membrane-bound Q intermediate 3-octaprenyl-4-hydroxybenzoate. The polypeptide is 4-hydroxybenzoate octaprenyltransferase (Pseudomonas putida (strain ATCC 700007 / DSM 6899 / JCM 31910 / BCRC 17059 / LMG 24140 / F1)).